The sequence spans 584 residues: uncharacterized protein (584 aa).

Disordered stretches follow at residues 151-188 (EHPP…DNDL), 222-243 (KRKE…SRAN), 399-418 (SETP…PPDF), and 433-584 (MQPS…AKSD). Basic and acidic residues predominate over residues 159-188 (TSSEKTRSENRERKKRWREQNEERNKDNDL). Over residues 231–243 (LSQNQSSNASRAN) the composition is skewed to low complexity. Composition is skewed to polar residues over residues 399–409 (SETPTPVSGNG), 433–453 (MQPS…SSEM), 483–500 (NAVT…SGSP), 511–531 (NYSQ…SSLP), and 572–584 (QRSS…AKSD).

This is an uncharacterized protein from Schizosaccharomyces pombe (strain 972 / ATCC 24843) (Fission yeast).